We begin with the raw amino-acid sequence, 116 residues long: Host cell factor C1 regulator 1 (116 aa).

Positions 1–22 (MILQQPLERGPPGRDPRATTGV) are disordered. An interaction with HCFC1 region spans residues 54-57 (DHPY). Positions 88-97 (IPEALRLLRL) match the Nuclear export signal motif.

In terms of assembly, interacts with HCFC1.

It is found in the cytoplasm. Its subcellular location is the nucleus. Functionally, regulates HCFC1 activity by modulating its subcellular localization. Overexpression of HCFC1R1 leads to accumulation of HCFC1 in the cytoplasm. HCFC1R1-mediated export may provide the pool of cytoplasmic HCFC1 required for import of virion-derived VP16 into the nucleus. This is Host cell factor C1 regulator 1 (Hcfc1r1) from Rattus norvegicus (Rat).